A 555-amino-acid chain; its full sequence is Formate--tetrahydrofolate ligase (555 aa).

Position 65-72 (65-72 (TPAGEGKS)) interacts with ATP.

It belongs to the formate--tetrahydrofolate ligase family.

It carries out the reaction (6S)-5,6,7,8-tetrahydrofolate + formate + ATP = (6R)-10-formyltetrahydrofolate + ADP + phosphate. It functions in the pathway one-carbon metabolism; tetrahydrofolate interconversion. The chain is Formate--tetrahydrofolate ligase from Staphylococcus aureus (strain MRSA252).